Reading from the N-terminus, the 306-residue chain is GTP-binding protein RAD (306 aa).

Residues 1-13 (MTLNGGSGAGGSR) are compositionally biased toward gly residues. The segment at 1 to 91 (MTLNGGSGAG…GDSGSEDGVY (91 aa)) is disordered. An Omega-N-methylarginine modification is found at Arg-23. The residue at position 25 (Ser-25) is a Phosphoserine. Residues 56–88 (AATAAGTRTQGQRLDWPEGSSDSLSSGDSGSED) show a composition bias toward low complexity. Residues 97 to 104 (GAPGVGKS) and 201 to 204 (NKSD) each bind GTP. The interval 276-295 (AKLFLGRIVARNSRKMAFLA) is calmodulin-binding.

The protein belongs to the small GTPase superfamily. RGK family. Interacts with Calmodulin preferentially in the inactive, GDP-bound form. Interacts with CAMK2D. Interacts with CACNB2; interaction may be involved in beta-adrenergic regulation of heart rate and contractile force. Interaction with CACNB2 regulates the trafficking of CACNA1C to the cell membrane.

Its subcellular location is the cell membrane. Its function is as follows. May regulate basal voltage-dependent L-type Ca(2+) currents and be required for beta-adrenergic augmentation of Ca(2+) influx in cardiomyocytes, thereby regulating increases in heart rate and contractile force. May play an important role in cardiac antiarrhythmia via the strong suppression of voltage-dependent L-type Ca(2+) currents. Regulates voltage-gated L-type calcium channel subunit alpha-1C trafficking to the cell membrane. Inhibits cardiac hypertrophy through the calmodulin-dependent kinase II (CaMKII) pathway. Inhibits phosphorylation and activation of CAMK2D. This Rattus norvegicus (Rat) protein is GTP-binding protein RAD (Rrad).